A 236-amino-acid polypeptide reads, in one-letter code: uncharacterized protein (236 aa).

The first 23 residues, 1 to 23 (MRRILSILVFAIMLAGCSSNAST), serve as a signal peptide directing secretion. Positions 22–62 (STEKQHAGGEKTVKAEPQSTSSQKDSTDDYQPNSQVTDDRT) are disordered. Residues 24–35 (EKQHAGGEKTVK) are compositionally biased toward basic and acidic residues.

This is an uncharacterized protein from Bacillus subtilis (strain 168).